The chain runs to 59 residues: Large ribosomal subunit protein uL30 (59 aa).

This sequence belongs to the universal ribosomal protein uL30 family. As to quaternary structure, part of the 50S ribosomal subunit.

The chain is Large ribosomal subunit protein uL30 from Buchnera aphidicola subsp. Acyrthosiphon kondoi (Acyrthosiphon kondoi symbiotic bacterium).